We begin with the raw amino-acid sequence, 369 residues long: MSVSAIGFEGYEKRLEVSFFEPSLFVDTHGKGLRALPKSQIDEILAPAECTIVSSLSNDELDSYVLSESSLFIFPYKIIIKTCGTTKLLPSIEPLLRLAGELSLEVKSVRYTRGSFLCPGGQPFPHRNFSEEVSVLDGHFAKMGLSSVAYLMGDDDETKKWHVYSASAPARNGNGNNNNNVYTLEMCMTGLDKEKASVFYKNESSSAGSMTDNSGIRKILPQSQICDFEFEPCGYSMNSVEGDAISTIHVTPEDGFSYASFEAVGYDFTTMDLSHLVSKVLTCFEPKQFSVAVHSSVAQKSYDSGLSVDLEDYGCRETTIELLGEERGTVMYQSFEKLGRYCGSPRSTLKCEWSSSSSCTSEDEKEEGI.

Catalysis depends on residues glutamate 9 and glutamate 12. Serine 69 serves as the catalytic Schiff-base intermediate with substrate; via pyruvic acid. Serine 69 is modified (pyruvic acid (Ser); by autocatalysis). Cysteine 83 serves as the catalytic Proton donor; for catalytic activity. Residues serine 236 and histidine 249 each act as proton acceptor; for processing activity in the active site.

It belongs to the eukaryotic AdoMetDC family. It depends on pyruvate as a cofactor. Is synthesized initially as an inactive proenzyme. Formation of the active enzyme involves a self-maturation process in which the active site pyruvoyl group is generated from an internal serine residue via an autocatalytic post-translational modification. Two non-identical subunits are generated from the proenzyme in this reaction, and the pyruvate is formed at the N-terminus of the alpha chain, which is derived from the carboxyl end of the proenzyme. The post-translation cleavage follows an unusual pathway, termed non-hydrolytic serinolysis, in which the side chain hydroxyl group of the serine supplies its oxygen atom to form the C-terminus of the beta chain, while the remainder of the serine residue undergoes an oxidative deamination to produce ammonia and the pyruvoyl group blocking the N-terminus of the alpha chain.

The catalysed reaction is S-adenosyl-L-methionine + H(+) = S-adenosyl 3-(methylsulfanyl)propylamine + CO2. It participates in amine and polyamine biosynthesis; S-adenosylmethioninamine biosynthesis; S-adenosylmethioninamine from S-adenosyl-L-methionine: step 1/1. The polypeptide is S-adenosylmethionine decarboxylase proenzyme 2 (SAMDC2) (Brassica juncea (Indian mustard)).